A 228-amino-acid chain; its full sequence is Ribosomal RNA large subunit methyltransferase E (228 aa).

S-adenosyl-L-methionine is bound by residues G76, W78, D99, D115, and D139. The Proton acceptor role is filled by K179.

The protein belongs to the class I-like SAM-binding methyltransferase superfamily. RNA methyltransferase RlmE family.

It is found in the cytoplasm. The enzyme catalyses uridine(2552) in 23S rRNA + S-adenosyl-L-methionine = 2'-O-methyluridine(2552) in 23S rRNA + S-adenosyl-L-homocysteine + H(+). Specifically methylates the uridine in position 2552 of 23S rRNA at the 2'-O position of the ribose in the fully assembled 50S ribosomal subunit. The chain is Ribosomal RNA large subunit methyltransferase E from Bradyrhizobium diazoefficiens (strain JCM 10833 / BCRC 13528 / IAM 13628 / NBRC 14792 / USDA 110).